We begin with the raw amino-acid sequence, 55 residues long: uncharacterized protein (55 aa).

Positions 1-25 (MKFVKAIWPFVAVAIVFMFMSAFKF) are cleaved as a signal peptide.

This is an uncharacterized protein from Bacillus subtilis (strain 168).